The primary structure comprises 776 residues: Protein translocase subunit SecA 2 (776 aa).

ATP-binding positions include glutamine 80, glycine 98–threonine 102, and aspartate 486.

Belongs to the SecA family. As to quaternary structure, monomer and homodimer. Part of the essential Sec protein translocation apparatus which comprises SecA, SecYEG and auxiliary proteins SecDF. Other proteins may also be involved.

Its subcellular location is the cell membrane. It localises to the cytoplasm. It carries out the reaction ATP + H2O + cellular proteinSide 1 = ADP + phosphate + cellular proteinSide 2.. Its function is as follows. Part of the Sec protein translocase complex. Interacts with the SecYEG preprotein conducting channel. Has a central role in coupling the hydrolysis of ATP to the transfer of proteins into and across the cell membrane, serving as an ATP-driven molecular motor driving the stepwise translocation of polypeptide chains across the membrane. This Listeria welshimeri serovar 6b (strain ATCC 35897 / DSM 20650 / CCUG 15529 / CIP 8149 / NCTC 11857 / SLCC 5334 / V8) protein is Protein translocase subunit SecA 2.